The primary structure comprises 971 residues: Nuclear factor NF-kappa-B p110 subunit (971 aa).

Low complexity predominate over residues 23 to 41; it reads STSGYSSSTSPNSTNRSFS. Positions 23-46 are disordered; that stretch reads STSGYSSSTSPNSTNRSFSPAHSP. One can recognise an RHD domain in the interval 147 to 339; the sequence is KHVPQLRIVE…NAINNRKSAQ (193 aa). Position 431 is a phosphoserine; by PKA (Ser431). A Nuclear localization signal motif is present at residues 452–457; the sequence is SRKRRR. A disordered region spans residues 453–496; it reads RKRRRTGSSANSSSSGTESSNNSLDLPKTLGLAQPPNGLPNLSQ. Residues 460–475 are compositionally biased toward low complexity; it reads SSANSSSSGTESSNNS. Position 620 is a phosphothreonine (Thr620). Residue Tyr626 is modified to Phosphotyrosine. 5 ANK repeats span residues 640-669, 673-702, 710-740, 745-775, and 783-812; these read DGDS…NPNL, AGNT…TVQL, DGLT…SISV, DGNN…NLTD, and AGHT…EKGE. Residues 826-877 are disordered; that stretch reads IDSSSDESSDAGQLEIKSEEMDIETKDEDSVELDLSSGPRRQKDESSRDTEM. The segment covering 866–877 has biased composition (basic and acidic residues); it reads RQKDESSRDTEM. Residue Ser950 is modified to Phosphoserine.

Rel-p68 subunit interacts with Dredd. Interacts with DMAP1. Interacts with akirin; interaction is immune stimulation-dependent; activates selected rel target gene promoters. Post-translationally, phosphorylated by lipopolysaccharide (LPS)-activated I-kappa-B kinase complex before being cleaved. Rel-p110 subunit is cleaved within seconds of an immune challenge into Rel-p49 subunit and Rel-p68 subunit. Rel-p110 subunit reappears after 45 minutes.

The protein localises to the nucleus. It localises to the cytoplasm. Its function is as follows. Transcription factor that plays a key role in the humoral immune response as part of the peptidoglycan recognition protein (IMD) signaling pathway. Rel-p68 subunit translocates to the nucleus where it binds to the promoter of the Cecropin A1 gene and probably other antimicrobial peptide genes. I-kappa-B kinase complex (IKKbeta and key) and PGRP-LC are essential signaling components in transmitting the lipopolysaccharide (LPS) signal leading to cact degradation for NF-kappa-B (rel) activation. Part of a Toll-related receptor pathway that functions in the apoptosis of unfit cells during cell competition. Also part of some antiviral immunity: activated downstream of Sting signaling, which detects double-stranded RNA (dsRNA) from viruses, and promotes expression of antiviral effector genes. May be part of a NF-kappa-B and Tollo signaling cascade that regulates development of the peripheral nervous system. Possibly post-transcriptionally regulates the neuron-specific genes sc and ase, by promoting the rapid turnover of their transcripts in the wing imaginal disk. This chain is Nuclear factor NF-kappa-B p110 subunit, found in Drosophila melanogaster (Fruit fly).